A 146-amino-acid chain; its full sequence is Acidic phospholipase A2 S14-72F (146 aa).

Positions 1–19 (MYPAHLLVLLAVCVSLLGA) are cleaved as a signal peptide. Residues 20 to 27 (ASIPPQPL) constitute a propeptide that is removed on maturation. 7 cysteine pairs are disulfide-bonded: Cys-38–Cys-98, Cys-54–Cys-145, Cys-56–Cys-72, Cys-71–Cys-126, Cys-78–Cys-119, Cys-87–Cys-112, and Cys-105–Cys-117. Tyr-55, Gly-57, and Gly-59 together coordinate Ca(2+). His-75 is a catalytic residue. A Ca(2+)-binding site is contributed by Asp-76. Residue Asp-120 is part of the active site.

This sequence belongs to the phospholipase A2 family. Group I subfamily. D49 sub-subfamily. The cofactor is Ca(2+). Expressed by the venom gland.

Its subcellular location is the secreted. It catalyses the reaction a 1,2-diacyl-sn-glycero-3-phosphocholine + H2O = a 1-acyl-sn-glycero-3-phosphocholine + a fatty acid + H(+). In terms of biological role, snake venom phospholipase A2 (PLA2) that inhibits collagen-induced platelet aggregation. PLA2 catalyzes the calcium-dependent hydrolysis of the 2-acyl groups in 3-sn-phosphoglycerides. This is Acidic phospholipase A2 S14-72F from Austrelaps superbus (Lowland copperhead snake).